The sequence spans 279 residues: 2-dehydro-3-deoxyphosphooctonate aldolase (279 aa).

The protein belongs to the KdsA family.

Its subcellular location is the cytoplasm. The enzyme catalyses D-arabinose 5-phosphate + phosphoenolpyruvate + H2O = 3-deoxy-alpha-D-manno-2-octulosonate-8-phosphate + phosphate. It participates in carbohydrate biosynthesis; 3-deoxy-D-manno-octulosonate biosynthesis; 3-deoxy-D-manno-octulosonate from D-ribulose 5-phosphate: step 2/3. The protein operates within bacterial outer membrane biogenesis; lipopolysaccharide biosynthesis. This Aromatoleum aromaticum (strain DSM 19018 / LMG 30748 / EbN1) (Azoarcus sp. (strain EbN1)) protein is 2-dehydro-3-deoxyphosphooctonate aldolase.